The following is a 95-amino-acid chain: Small ribosomal subunit protein bS6 (95 aa).

Belongs to the bacterial ribosomal protein bS6 family.

Binds together with bS18 to 16S ribosomal RNA. The sequence is that of Small ribosomal subunit protein bS6 from Symbiobacterium thermophilum (strain DSM 24528 / JCM 14929 / IAM 14863 / T).